Reading from the N-terminus, the 406-residue chain is Autotransporter heptosyltransferase TibC (406 aa).

ADP-D-glycero-beta-D-manno-heptose-binding residues include T107, L108, and G109. The active-site Proton acceptor is the D110. ADP-D-glycero-beta-D-manno-heptose-binding residues include Q224, T226, K230, R257, L281, G302, and E326. Fe(3+)-binding residues include C339, C342, C358, and C370.

This sequence belongs to the glycosyltransferase 9 family. In terms of assembly, homododecamer composed of 6 homodimers forming a ring. It depends on Fe(3+) as a cofactor.

The catalysed reaction is ADP-D-glycero-beta-D-manno-heptose + L-seryl-[protein] = O-(D-glycero-alpha-D-manno-heptosyl)-L-seryl-[protein] + ADP + H(+). Glycosylates adhesin TibA. Specifically adds anomer D-glycero-beta-D-manno-heptose. Cannot use ADP-L-glycero-beta-D-manno-heptose as a sugar donor. In Escherichia coli O78:H11 (strain H10407 / ETEC), this protein is Autotransporter heptosyltransferase TibC.